A 113-amino-acid chain; its full sequence is Large ribosomal subunit protein uL22 (113 aa).

Belongs to the universal ribosomal protein uL22 family. As to quaternary structure, part of the 50S ribosomal subunit.

Functionally, this protein binds specifically to 23S rRNA; its binding is stimulated by other ribosomal proteins, e.g. L4, L17, and L20. It is important during the early stages of 50S assembly. It makes multiple contacts with different domains of the 23S rRNA in the assembled 50S subunit and ribosome. In terms of biological role, the globular domain of the protein is located near the polypeptide exit tunnel on the outside of the subunit, while an extended beta-hairpin is found that lines the wall of the exit tunnel in the center of the 70S ribosome. This is Large ribosomal subunit protein uL22 from Halothermothrix orenii (strain H 168 / OCM 544 / DSM 9562).